A 213-amino-acid polypeptide reads, in one-letter code: Thiamine-phosphate synthase (213 aa).

4-amino-2-methyl-5-(diphosphooxymethyl)pyrimidine is bound by residues 39 to 43 and aspartate 71; that span reads QYRDK. Aspartate 72 and aspartate 91 together coordinate Mg(2+). 4-amino-2-methyl-5-(diphosphooxymethyl)pyrimidine is bound at residue serine 108. 135 to 137 contacts 2-[(2R,5Z)-2-carboxy-4-methylthiazol-5(2H)-ylidene]ethyl phosphate; it reads TDT. Lysine 138 serves as a coordination point for 4-amino-2-methyl-5-(diphosphooxymethyl)pyrimidine. Residues glycine 165 and 185–186 contribute to the 2-[(2R,5Z)-2-carboxy-4-methylthiazol-5(2H)-ylidene]ethyl phosphate site; that span reads VS.

Belongs to the thiamine-phosphate synthase family. The cofactor is Mg(2+).

The enzyme catalyses 2-[(2R,5Z)-2-carboxy-4-methylthiazol-5(2H)-ylidene]ethyl phosphate + 4-amino-2-methyl-5-(diphosphooxymethyl)pyrimidine + 2 H(+) = thiamine phosphate + CO2 + diphosphate. It carries out the reaction 2-(2-carboxy-4-methylthiazol-5-yl)ethyl phosphate + 4-amino-2-methyl-5-(diphosphooxymethyl)pyrimidine + 2 H(+) = thiamine phosphate + CO2 + diphosphate. It catalyses the reaction 4-methyl-5-(2-phosphooxyethyl)-thiazole + 4-amino-2-methyl-5-(diphosphooxymethyl)pyrimidine + H(+) = thiamine phosphate + diphosphate. Its pathway is cofactor biosynthesis; thiamine diphosphate biosynthesis; thiamine phosphate from 4-amino-2-methyl-5-diphosphomethylpyrimidine and 4-methyl-5-(2-phosphoethyl)-thiazole: step 1/1. Condenses 4-methyl-5-(beta-hydroxyethyl)thiazole monophosphate (THZ-P) and 2-methyl-4-amino-5-hydroxymethyl pyrimidine pyrophosphate (HMP-PP) to form thiamine monophosphate (TMP). This is Thiamine-phosphate synthase from Thermoplasma acidophilum (strain ATCC 25905 / DSM 1728 / JCM 9062 / NBRC 15155 / AMRC-C165).